Reading from the N-terminus, the 1390-residue chain is DNA-directed RNA polymerase subunit beta (1390 aa).

This sequence belongs to the RNA polymerase beta chain family. The RNAP catalytic core consists of 2 alpha, 1 beta, 1 beta' and 1 omega subunit. When a sigma factor is associated with the core the holoenzyme is formed, which can initiate transcription.

It catalyses the reaction RNA(n) + a ribonucleoside 5'-triphosphate = RNA(n+1) + diphosphate. DNA-dependent RNA polymerase catalyzes the transcription of DNA into RNA using the four ribonucleoside triphosphates as substrates. The polypeptide is DNA-directed RNA polymerase subunit beta (Mycoplasma genitalium (strain ATCC 33530 / DSM 19775 / NCTC 10195 / G37) (Mycoplasmoides genitalium)).